Here is a 218-residue protein sequence, read N- to C-terminus: Hypoxanthine-guanine phosphoribosyltransferase (218 aa).

An N-acetylalanine modification is found at Ala2. Lys69 contacts GMP. Residue Lys103 is modified to N6-acetyllysine. Lys115 participates in a covalent cross-link: Glycyl lysine isopeptide (Lys-Gly) (interchain with G-Cter in SUMO1); alternate. Residue Lys115 forms a Glycyl lysine isopeptide (Lys-Gly) (interchain with G-Cter in SUMO2); alternate linkage. Residues Glu134–Thr142, Lys166, Lys186–Val188, and Asp194 each bind GMP. The active-site Proton acceptor is Asp138. Thr142 carries the post-translational modification Phosphothreonine. Asp194 provides a ligand contact to Mg(2+).

This sequence belongs to the purine/pyrimidine phosphoribosyltransferase family. In terms of assembly, homotetramer. Requires Mg(2+) as cofactor.

Its subcellular location is the cytoplasm. The catalysed reaction is IMP + diphosphate = hypoxanthine + 5-phospho-alpha-D-ribose 1-diphosphate. The enzyme catalyses GMP + diphosphate = guanine + 5-phospho-alpha-D-ribose 1-diphosphate. Its pathway is purine metabolism; IMP biosynthesis via salvage pathway; IMP from hypoxanthine: step 1/1. Converts guanine to guanosine monophosphate, and hypoxanthine to inosine monophosphate. Transfers the 5-phosphoribosyl group from 5-phosphoribosylpyrophosphate onto the purine. Plays a central role in the generation of purine nucleotides through the purine salvage pathway. This Canis lupus familiaris (Dog) protein is Hypoxanthine-guanine phosphoribosyltransferase (HPRT1).